The primary structure comprises 368 residues: 3-dehydroquinate synthase (368 aa).

Residues 69–74, 103–107, 127–128, lysine 140, and lysine 149 contribute to the NAD(+) site; these read DGEAYK, GVIGD, and TT. Residues glutamate 182, histidine 245, and histidine 262 each contribute to the Zn(2+) site.

Belongs to the sugar phosphate cyclases superfamily. Dehydroquinate synthase family. The cofactor is Co(2+). Zn(2+) serves as cofactor. NAD(+) is required as a cofactor.

It is found in the cytoplasm. It carries out the reaction 7-phospho-2-dehydro-3-deoxy-D-arabino-heptonate = 3-dehydroquinate + phosphate. The protein operates within metabolic intermediate biosynthesis; chorismate biosynthesis; chorismate from D-erythrose 4-phosphate and phosphoenolpyruvate: step 2/7. Catalyzes the conversion of 3-deoxy-D-arabino-heptulosonate 7-phosphate (DAHP) to dehydroquinate (DHQ). This is 3-dehydroquinate synthase from Pseudomonas aeruginosa (strain UCBPP-PA14).